A 257-amino-acid chain; its full sequence is Acetylglutamate kinase (257 aa).

Substrate-binding positions include 43 to 44, Arg-65, and Asn-157; that span reads GG. Residues 180–185 and 208–210 each bind ATP; these read DVSGIL and IIT.

It belongs to the acetylglutamate kinase family. ArgB subfamily. Homodimer.

It localises to the cytoplasm. It carries out the reaction N-acetyl-L-glutamate + ATP = N-acetyl-L-glutamyl 5-phosphate + ADP. Its pathway is amino-acid biosynthesis; L-arginine biosynthesis; N(2)-acetyl-L-ornithine from L-glutamate: step 2/4. In terms of biological role, catalyzes the ATP-dependent phosphorylation of N-acetyl-L-glutamate. This Klebsiella pneumoniae (strain 342) protein is Acetylglutamate kinase.